A 271-amino-acid polypeptide reads, in one-letter code: Proteasome inhibitor PI31 subunit (271 aa).

N-acetylalanine is present on A2. The interval 2-150 is important for homodimerization and interaction with FBXO7; it reads AGLEVLFASA…PIHEQWEKAN (149 aa). The residue at position 153 (S153) is a Phosphoserine. R205 carries the omega-N-methylarginine modification. The residue at position 219 (R219) is an Asymmetric dimethylarginine. The segment at 222 to 271 is disordered; that stretch reads IDPSSGLPNRLPPGAVPPGARFDPFGPIGTSPPGPNPDHLPPPGYDDMYL. R231 carries the post-translational modification Omega-N-methylarginine. Positions 251-265 are enriched in pro residues; it reads TSPPGPNPDHLPPPG. The residue at position 252 (S252) is a Phosphoserine.

The protein belongs to the proteasome inhibitor PI31 family. Monomer and homodimer. Interacts with FBXO7. Interacts with the 20S proteasome.

The protein resides in the cytoplasm. The protein localises to the endoplasmic reticulum. Its function is as follows. Plays an important role in control of proteasome function. Inhibits the hydrolysis of protein and peptide substrates by the 20S proteasome. Also inhibits the activation of the proteasome by the proteasome regulatory proteins PA700 and PA28. This chain is Proteasome inhibitor PI31 subunit (PSMF1), found in Homo sapiens (Human).